The sequence spans 247 residues: Cementoblastoma-derived protein 1 (247 aa).

The segment covering 1-28 (MGTSSTDSQQAGHRRCSTSNTSAENLTC) has biased composition (polar residues). 2 disordered regions span residues 1–52 (MGTS…AGQP) and 147–183 (EENS…EKVK).

Phosphorylated. In terms of processing, N-glycosylated. Expressed by cementoblasts, a subpopulation of periodontal ligament cells and cells located around vessels in periodontium (at protein level).

It is found in the cytoplasm. The protein resides in the nucleus. In terms of biological role, may play a role in development of the periodontium which surrounds and supports the teeth by promoting the differentiation of multi-potent cells from the periodontal ligament into cementoblasts to form the cementum. Binds hydroxyapatite and may promote the biomineralization of the cementum. Also promotes cell proliferation. In Homo sapiens (Human), this protein is Cementoblastoma-derived protein 1.